The chain runs to 514 residues: 2,3-bisphosphoglycerate-independent phosphoglycerate mutase (514 aa).

Mn(2+)-binding residues include Asp14 and Ser64. Catalysis depends on Ser64, which acts as the Phosphoserine intermediate. Substrate is bound by residues His125, Arg155 to Asp156, Arg187, Arg193, Arg263 to Arg266, and Lys336. Mn(2+)-binding residues include Asp403, His407, Asp444, His445, and His463.

Belongs to the BPG-independent phosphoglycerate mutase family. Monomer. Mn(2+) serves as cofactor.

The enzyme catalyses (2R)-2-phosphoglycerate = (2R)-3-phosphoglycerate. Its pathway is carbohydrate degradation; glycolysis; pyruvate from D-glyceraldehyde 3-phosphate: step 3/5. Functionally, catalyzes the interconversion of 2-phosphoglycerate and 3-phosphoglycerate. The sequence is that of 2,3-bisphosphoglycerate-independent phosphoglycerate mutase from Salmonella choleraesuis (strain SC-B67).